Here is a 218-residue protein sequence, read N- to C-terminus: Small ribosomal subunit protein uS3 (218 aa).

One can recognise a KH type-2 domain in the interval Ile-38–Lys-106.

It belongs to the universal ribosomal protein uS3 family. Part of the 30S ribosomal subunit. Forms a tight complex with proteins S10 and S14.

Functionally, binds the lower part of the 30S subunit head. Binds mRNA in the 70S ribosome, positioning it for translation. The sequence is that of Small ribosomal subunit protein uS3 from Anoxybacillus flavithermus (strain DSM 21510 / WK1).